The chain runs to 326 residues: Alkanal monooxygenase beta chain (326 aa).

This sequence belongs to the bacterial luciferase oxidoreductase family. In terms of assembly, heterodimer of an alpha and a beta chain.

It catalyses the reaction a long-chain fatty aldehyde + FMNH2 + O2 = a long-chain fatty acid + hnu + FMN + H2O + 2 H(+). In terms of biological role, light-emitting reaction in luminous bacteria. The specific role of the beta subunit is unknown, but it is absolutely required for bioluminescence activity. The polypeptide is Alkanal monooxygenase beta chain (luxB) (Aliivibrio fischeri (Vibrio fischeri)).